The primary structure comprises 295 residues: Protoheme IX farnesyltransferase 2 (295 aa).

The next 9 helical transmembrane spans lie at 9-29, 36-56, 80-100, 108-128, 135-155, 163-183, 209-229, 230-250, and 265-285; these read ITKP…FFLA, LAVF…GCVF, LISL…GVAL, LAAL…SLYL, GTLV…VAVT, LTLL…IAIF, ILIY…SGYA, GMSY…MAWT, and FVFS…DFKV.

The protein belongs to the UbiA prenyltransferase family. Protoheme IX farnesyltransferase subfamily.

The protein localises to the cell inner membrane. It catalyses the reaction heme b + (2E,6E)-farnesyl diphosphate + H2O = Fe(II)-heme o + diphosphate. The protein operates within porphyrin-containing compound metabolism; heme O biosynthesis; heme O from protoheme: step 1/1. Functionally, converts heme B (protoheme IX) to heme O by substitution of the vinyl group on carbon 2 of heme B porphyrin ring with a hydroxyethyl farnesyl side group. The sequence is that of Protoheme IX farnesyltransferase 2 from Pseudomonas fluorescens (strain Pf0-1).